The primary structure comprises 75 residues: Translational regulator CsrA (75 aa).

The protein belongs to the CsrA/RsmA family. In terms of assembly, homodimer; the beta-strands of each monomer intercalate to form a hydrophobic core, while the alpha-helices form wings that extend away from the core.

The protein resides in the cytoplasm. A translational regulator that binds mRNA to regulate translation initiation and/or mRNA stability. Usually binds in the 5'-UTR at or near the Shine-Dalgarno sequence preventing ribosome-binding, thus repressing translation. Its main target seems to be the major flagellin gene, while its function is anatagonized by FliW. This is Translational regulator CsrA from Acetivibrio thermocellus (strain ATCC 27405 / DSM 1237 / JCM 9322 / NBRC 103400 / NCIMB 10682 / NRRL B-4536 / VPI 7372) (Clostridium thermocellum).